The chain runs to 458 residues: Cysteine protease ATG4C (458 aa).

An N-acetylmethionine modification is found at methionine 1. Catalysis depends on cysteine 111, which acts as the Nucleophile. Catalysis depends on residues aspartate 345 and histidine 347. Serine 451 carries the phosphoserine modification. Threonine 452 is modified (phosphothreonine).

It belongs to the peptidase C54 family.

It is found in the cytoplasm. It catalyses the reaction [protein]-C-terminal L-amino acid-glycyl-phosphatidylethanolamide + H2O = [protein]-C-terminal L-amino acid-glycine + a 1,2-diacyl-sn-glycero-3-phosphoethanolamine. With respect to regulation, inhibited by N-ethylmaleimide. Functionally, cysteine protease that plays a key role in autophagy by mediating both proteolytic activation and delipidation of ATG8 family proteins. The protease activity is required for proteolytic activation of ATG8 family proteins: cleaves the C-terminal amino acid of ATG8 proteins MAP1LC3 and GABARAPL2, to reveal a C-terminal glycine. Exposure of the glycine at the C-terminus is essential for ATG8 proteins conjugation to phosphatidylethanolamine (PE) and insertion to membranes, which is necessary for autophagy. In addition to the protease activity, also mediates delipidation of ATG8 family proteins. Catalyzes delipidation of PE-conjugated forms of ATG8 proteins during macroautophagy. Compared to ATG4B, the major protein for proteolytic activation of ATG8 proteins, shows weaker ability to cleave the C-terminal amino acid of ATG8 proteins, while it displays stronger delipidation activity. In contrast to other members of the family, weakly or not involved in phagophore growth during mitophagy. This chain is Cysteine protease ATG4C, found in Homo sapiens (Human).